We begin with the raw amino-acid sequence, 190 residues long: ATP synthase subunit b (190 aa).

Residues 34–54 (LDIFETNLINLAILVGILFYF) traverse the membrane as a helical segment.

The protein belongs to the ATPase B chain family. F-type ATPases have 2 components, F(1) - the catalytic core - and F(0) - the membrane proton channel. F(1) has five subunits: alpha(3), beta(3), gamma(1), delta(1), epsilon(1). F(0) has four main subunits: a(1), b(1), b'(1) and c(10-14). The alpha and beta chains form an alternating ring which encloses part of the gamma chain. F(1) is attached to F(0) by a central stalk formed by the gamma and epsilon chains, while a peripheral stalk is formed by the delta, b and b' chains.

It localises to the cellular thylakoid membrane. Its function is as follows. F(1)F(0) ATP synthase produces ATP from ADP in the presence of a proton or sodium gradient. F-type ATPases consist of two structural domains, F(1) containing the extramembraneous catalytic core and F(0) containing the membrane proton channel, linked together by a central stalk and a peripheral stalk. During catalysis, ATP synthesis in the catalytic domain of F(1) is coupled via a rotary mechanism of the central stalk subunits to proton translocation. Functionally, component of the F(0) channel, it forms part of the peripheral stalk, linking F(1) to F(0). This Nostoc punctiforme (strain ATCC 29133 / PCC 73102) protein is ATP synthase subunit b.